Consider the following 384-residue polypeptide: ATP synthase subunit a (384 aa).

The tract at residues 22–60 (PAPAAAPVEQHGAPAPEAAAPDAHAAPAGEHGAAVEAHA) is disordered. 6 helical membrane-spanning segments follow: residues 131–151 (KHVMMMWFASALLLVVVLAAV), 189–209 (FVPYLVTAFFFILFLNLFGLI), 218–238 (NLSVTVALALFTFLITQYAAI), 258–278 (LAPLWIIMIPVEFLGLFTKPF), 293–313 (FVILALLGLIFALGTPWVAFG), and 319–339 (LGIFLLELFVAFVQAYIFTML). Residues 355 to 384 (HGHAEEHGHAGPGMGSEHGSHVAGASPGHG) are disordered.

It belongs to the ATPase A chain family. In terms of assembly, F-type ATPases have 2 components, CF(1) - the catalytic core - and CF(0) - the membrane proton channel. CF(1) has five subunits: alpha(3), beta(3), gamma(1), delta(1), epsilon(1). CF(0) has three main subunits: a(1), b(2) and c(9-12). The alpha and beta chains form an alternating ring which encloses part of the gamma chain. CF(1) is attached to CF(0) by a central stalk formed by the gamma and epsilon chains, while a peripheral stalk is formed by the delta and b chains.

It localises to the cell inner membrane. Its function is as follows. Key component of the proton channel; it plays a direct role in the translocation of protons across the membrane. The chain is ATP synthase subunit a from Anaeromyxobacter dehalogenans (strain 2CP-1 / ATCC BAA-258).